The primary structure comprises 398 residues: Glia-derived nexin (398 aa).

The first 19 residues, 1–19, serve as a signal peptide directing secretion; it reads MNWHLPLFLLASVTLPSIC. N-linked (GlcNAc...) asparagine glycans are attached at residues N118 and N159.

This sequence belongs to the serpin family.

The protein resides in the secreted. It localises to the extracellular space. In terms of biological role, serine protease inhibitor with activity toward thrombin, trypsin, and urokinase. Promotes neurite extension by inhibiting thrombin. Binds heparin. The sequence is that of Glia-derived nexin (SERPINE2) from Homo sapiens (Human).